We begin with the raw amino-acid sequence, 336 residues long: tRNA N6-adenosine threonylcarbamoyltransferase (336 aa).

Residues His-112 and His-116 each coordinate Fe cation. Substrate is bound by residues 136–140 (LVSGG), Asp-169, Gly-182, and Asn-276. Asp-304 serves as a coordination point for Fe cation.

This sequence belongs to the KAE1 / TsaD family. It depends on Fe(2+) as a cofactor.

It localises to the cytoplasm. The enzyme catalyses L-threonylcarbamoyladenylate + adenosine(37) in tRNA = N(6)-L-threonylcarbamoyladenosine(37) in tRNA + AMP + H(+). Required for the formation of a threonylcarbamoyl group on adenosine at position 37 (t(6)A37) in tRNAs that read codons beginning with adenine. Is involved in the transfer of the threonylcarbamoyl moiety of threonylcarbamoyl-AMP (TC-AMP) to the N6 group of A37, together with TsaE and TsaB. TsaD likely plays a direct catalytic role in this reaction. The protein is tRNA N6-adenosine threonylcarbamoyltransferase of Francisella tularensis subsp. novicida (strain U112).